Consider the following 516-residue polypeptide: GMP synthase [glutamine-hydrolyzing] (516 aa).

The region spanning 8-198 (KILILDFGSQ…ALNICKCDAL (191 aa)) is the Glutamine amidotransferase type-1 domain. Residue Cys-84 is the Nucleophile of the active site. Active-site residues include His-172 and Glu-174. One can recognise a GMPS ATP-PPase domain in the interval 199-391 (WNIENIIEND…LGLPYNMLYR (193 aa)). 226–232 (SGGVDSS) serves as a coordination point for ATP.

In terms of assembly, homodimer.

The catalysed reaction is XMP + L-glutamine + ATP + H2O = GMP + L-glutamate + AMP + diphosphate + 2 H(+). Its pathway is purine metabolism; GMP biosynthesis; GMP from XMP (L-Gln route): step 1/1. In terms of biological role, catalyzes the synthesis of GMP from XMP. This is GMP synthase [glutamine-hydrolyzing] from Francisella philomiragia subsp. philomiragia (strain ATCC 25017 / CCUG 19701 / FSC 153 / O#319-036).